The following is a 121-amino-acid chain: Nitrogenase-stabilizing/protective protein NifW (121 aa).

The protein belongs to the NifW family. As to quaternary structure, homotrimer; associates with NifD.

May protect the nitrogenase Fe-Mo protein from oxidative damage. This is Nitrogenase-stabilizing/protective protein NifW from Leptothrix cholodnii (strain ATCC 51168 / LMG 8142 / SP-6) (Leptothrix discophora (strain SP-6)).